The primary structure comprises 851 residues: Alanine--tRNA ligase (851 aa).

4 residues coordinate Zn(2+): H554, H558, C656, and H660.

The protein belongs to the class-II aminoacyl-tRNA synthetase family. Zn(2+) serves as cofactor.

It localises to the cytoplasm. The enzyme catalyses tRNA(Ala) + L-alanine + ATP = L-alanyl-tRNA(Ala) + AMP + diphosphate. In terms of biological role, catalyzes the attachment of alanine to tRNA(Ala) in a two-step reaction: alanine is first activated by ATP to form Ala-AMP and then transferred to the acceptor end of tRNA(Ala). Also edits incorrectly charged Ser-tRNA(Ala) and Gly-tRNA(Ala) via its editing domain. The protein is Alanine--tRNA ligase of Aliarcobacter butzleri (strain RM4018) (Arcobacter butzleri).